The following is a 151-amino-acid chain: Tetratricopeptide repeat protein 32 (151 aa).

TPR repeat units follow at residues 8-41 (SHAT…CACA), 58-91 (ATAY…QPNF), and 92-125 (EVPY…NPGF).

The chain is Tetratricopeptide repeat protein 32 (TTC32) from Homo sapiens (Human).